A 115-amino-acid chain; its full sequence is uncharacterized protein (115 aa).

A signal peptide spans Met-1–Ser-20.

This is an uncharacterized protein from Escherichia coli O6:H1 (strain CFT073 / ATCC 700928 / UPEC).